The primary structure comprises 229 residues: Small ribosomal subunit protein uS3 (229 aa).

The region spanning Val39–Arg107 is the KH type-2 domain.

The protein belongs to the universal ribosomal protein uS3 family. As to quaternary structure, part of the 30S ribosomal subunit. Forms a tight complex with proteins S10 and S14.

In terms of biological role, binds the lower part of the 30S subunit head. Binds mRNA in the 70S ribosome, positioning it for translation. This Shewanella loihica (strain ATCC BAA-1088 / PV-4) protein is Small ribosomal subunit protein uS3.